Here is a 562-residue protein sequence, read N- to C-terminus: ATP-dependent RNA helicase dbp2 (562 aa).

Residues E132 to S160 carry the Q motif motif. Positions W163–V338 constitute a Helicase ATP-binding domain. A176–T183 serves as a coordination point for ATP. The DEAD box signature appears at D286–D289. Residues H370–A515 form the Helicase C-terminal domain. The interval G526 to S548 is RNA-binding RGG-box. A compositionally biased stretch (gly residues) spans W536–G550. The interval W536–W562 is disordered.

Belongs to the DEAD box helicase family. DDX5/DBP2 subfamily. Associates with polysomes.

It localises to the cytoplasm. It is found in the nucleus. It catalyses the reaction ATP + H2O = ADP + phosphate + H(+). ATP-dependent RNA helicase involved nonsense-mediated mRNA decay and ribosome biogenesis through rRNA processing. The protein is ATP-dependent RNA helicase dbp2 (drh-1) of Neurospora crassa (strain ATCC 24698 / 74-OR23-1A / CBS 708.71 / DSM 1257 / FGSC 987).